The primary structure comprises 395 residues: L-rhamnonate dehydratase (395 aa).

H23 and R49 together coordinate substrate. Mg(2+) is bound by residues D215, E241, and E269. H319 serves as the catalytic Proton acceptor. E339 serves as a coordination point for substrate.

This sequence belongs to the mandelate racemase/muconate lactonizing enzyme family. RhamD subfamily. Homooctamer; tetramer of dimers. Requires Mg(2+) as cofactor.

It carries out the reaction L-rhamnonate = 2-dehydro-3-deoxy-L-rhamnonate + H2O. In terms of biological role, catalyzes the dehydration of L-rhamnonate to 2-keto-3-deoxy-L-rhamnonate (KDR). In Polaromonas sp. (strain JS666 / ATCC BAA-500), this protein is L-rhamnonate dehydratase (rhmD).